The sequence spans 357 residues: 3-dehydroquinate synthase (357 aa).

NAD(+) is bound by residues 104–108, 128–129, Lys-141, and 168–171; these read GVVGD, TT, and FLET. Residues Glu-183, His-243, and His-260 each contribute to the Zn(2+) site.

Belongs to the sugar phosphate cyclases superfamily. Dehydroquinate synthase family. Co(2+) serves as cofactor. Requires Zn(2+) as cofactor. The cofactor is NAD(+).

The protein resides in the cytoplasm. It catalyses the reaction 7-phospho-2-dehydro-3-deoxy-D-arabino-heptonate = 3-dehydroquinate + phosphate. Its pathway is metabolic intermediate biosynthesis; chorismate biosynthesis; chorismate from D-erythrose 4-phosphate and phosphoenolpyruvate: step 2/7. In terms of biological role, catalyzes the conversion of 3-deoxy-D-arabino-heptulosonate 7-phosphate (DAHP) to dehydroquinate (DHQ). The protein is 3-dehydroquinate synthase of Streptococcus pyogenes serotype M49 (strain NZ131).